The chain runs to 135 residues: Basic phospholipase A2 10 (135 aa).

Disulfide bonds link cysteine 28–cysteine 87, cysteine 42–cysteine 134, cysteine 44–cysteine 60, cysteine 59–cysteine 115, cysteine 66–cysteine 108, cysteine 76–cysteine 101, and cysteine 94–cysteine 106. The Ca(2+) site is built by tyrosine 43, glycine 45, and glycine 47. Histidine 63 is a catalytic residue. Aspartate 64 lines the Ca(2+) pocket. Aspartate 109 is a catalytic residue.

Belongs to the phospholipase A2 family. Group I subfamily. D49 sub-subfamily. It depends on Ca(2+) as a cofactor. In terms of tissue distribution, expressed by the venom gland.

It is found in the secreted. The catalysed reaction is a 1,2-diacyl-sn-glycero-3-phosphocholine + H2O = a 1-acyl-sn-glycero-3-phosphocholine + a fatty acid + H(+). Snake venom phospholipase A2 (PLA2) that inhibits neuromuscular transmission by blocking acetylcholine release from the nerve termini. PLA2 catalyzes the calcium-dependent hydrolysis of the 2-acyl groups in 3-sn-phosphoglycerides. In Bungarus fasciatus (Banded krait), this protein is Basic phospholipase A2 10.